The following is a 446-amino-acid chain: Na(+)-translocating NADH-quinone reductase subunit A (446 aa).

It belongs to the NqrA family. Composed of six subunits; NqrA, NqrB, NqrC, NqrD, NqrE and NqrF.

The catalysed reaction is a ubiquinone + n Na(+)(in) + NADH + H(+) = a ubiquinol + n Na(+)(out) + NAD(+). NQR complex catalyzes the reduction of ubiquinone-1 to ubiquinol by two successive reactions, coupled with the transport of Na(+) ions from the cytoplasm to the periplasm. NqrA to NqrE are probably involved in the second step, the conversion of ubisemiquinone to ubiquinol. This Psychromonas ingrahamii (strain DSM 17664 / CCUG 51855 / 37) protein is Na(+)-translocating NADH-quinone reductase subunit A.